Reading from the N-terminus, the 88-residue chain is Apolipoprotein C-I (88 aa).

An N-terminal signal peptide occupies residues 1–26 (MRLFLSLPVWVAVLAMVLEGPAPAQA).

The protein belongs to the apolipoprotein C1 family.

Its subcellular location is the secreted. Functionally, inhibitor of lipoprotein binding to the low density lipoprotein (LDL) receptor, LDL receptor-related protein, and very low density lipoprotein (VLDL) receptor. Associates with high density lipoproteins (HDL) and the triacylglycerol-rich lipoproteins in the plasma and makes up about 10% of the protein of the VLDL and 2% of that of HDL. Appears to interfere directly with fatty acid uptake and is also the major plasma inhibitor of cholesteryl ester transfer protein (CETP). Binds free fatty acids and reduces their intracellular esterification. Modulates the interaction of APOE with beta-migrating VLDL and inhibits binding of beta-VLDL to the LDL receptor-related protein. The polypeptide is Apolipoprotein C-I (APOC1) (Ursus maritimus (Polar bear)).